The following is a 122-amino-acid chain: MKTVAFLAVVVLFAAFACASCSSSYAAPAPAAAPASSYSSVPAPPCPKNYLFSCQPNLVPAPCAQQAAPAAYGSAGAYTEQVPSYIGFAPYQQLQQYHQRIGNAALIDELRSLGQGIQGQQY.

The N-terminal stretch at 1–19 is a signal peptide; sequence MKTVAFLAVVVLFAAFACA. A VM domain is found at 40–79; that stretch reads SVPAPPCPKNYLFSCQPNLVPAPCAQQAAPAAYGSAGAYT.

This sequence belongs to the vitelline membrane family.

It localises to the secreted. Functionally, major early eggshell protein. The chain is Vitelline membrane protein Vm32E from Drosophila persimilis (Fruit fly).